We begin with the raw amino-acid sequence, 706 residues long: Polycomb protein SCMH1 (706 aa).

2 MBT repeats span residues 28–126 and 134–235; these read FTWD…LQPP and SSWP…LQPP. 2 disordered regions span residues 233–350 and 576–595; these read QPPG…TVPS and GSDR…RDPS. Basic residues-rich tracts occupy residues 272–283 and 304–319; these read RGRKPGKKRGRT and FPKK…RKPR. The span at 329–340 shows a compositional bias: low complexity; it reads PTTSTPEPDTST. A compositionally biased stretch (basic and acidic residues) spans 576 to 591; it reads GSDRHLESRDPPRLSG. Positions 597–662 constitute an SAM domain; that stretch reads WTVEDVMQFV…SFHIDRLKQV (66 aa).

This sequence belongs to the SCM family. Associates with a PRC1-like complex. Interacts with the SAM domain of PHC1 via its SAM domain in vitro. In terms of tissue distribution, most abundant in testis. Moderate levels detected in heart, brain, lung, liver, skeletal muscle and kidney and lower levels in spleen.

The protein resides in the nucleus. Associates with Polycomb group (PcG) multiprotein complexes; the complex class is required to maintain the transcriptionally repressive state of some genes. This is Polycomb protein SCMH1 from Mus musculus (Mouse).